The chain runs to 115 residues: DNA-binding protein Ta0052 (115 aa).

Residues 1–41 are disordered; it reads MDDDEELERIRRQQLESMQRQAMQEQMREEQEKQREAERAR. The segment covering 15-25 has biased composition (low complexity); that stretch reads LESMQRQAMQE. The segment covering 26-41 has biased composition (basic and acidic residues); it reads QMREEQEKQREAERAR.

It belongs to the PDCD5 family.

The protein is DNA-binding protein Ta0052 of Thermoplasma acidophilum (strain ATCC 25905 / DSM 1728 / JCM 9062 / NBRC 15155 / AMRC-C165).